A 153-amino-acid chain; its full sequence is MMASMRVVKELEDLQKKPPPYLRNLSSDDANVLVWHALLLPDQPPYHLKAFNLRISFPPEYPFKPPMIKFTTKIYHPNVDENGQICLPIISSENWKPCTKTCQVLEALNVLVNRPNIREPLRMDLADLLTQNPELFRKNAEEFTLRFGVDRPS.

The UBC core domain maps to 2 to 149 (MASMRVVKEL…AEEFTLRFGV (148 aa)). Residue C86 is the Glycyl thioester intermediate of the active site.

It belongs to the ubiquitin-conjugating enzyme family. Interacts with RNF19A, RNF19B and RNF144B. Interacts with FLT3 (tyrosine phosphorylated). ISGylated. In terms of tissue distribution, present in natural killer cells (at protein level).

It catalyses the reaction S-ubiquitinyl-[E1 ubiquitin-activating enzyme]-L-cysteine + [E2 ubiquitin-conjugating enzyme]-L-cysteine = [E1 ubiquitin-activating enzyme]-L-cysteine + S-ubiquitinyl-[E2 ubiquitin-conjugating enzyme]-L-cysteine.. Its pathway is protein modification; protein ubiquitination. In terms of biological role, catalyzes the covalent attachment of ubiquitin or ISG15 to other proteins. Functions in the E6/E6-AP-induced ubiquitination of p53/TP53. Promotes ubiquitination and subsequent proteasomal degradation of FLT3. This chain is Ubiquitin/ISG15-conjugating enzyme E2 L6 (UBE2L6), found in Homo sapiens (Human).